The primary structure comprises 367 residues: Heme A synthase (367 aa).

The next 5 helical transmembrane spans lie at 25–45 (AIRIWLGCVLLALFALVLVGG), 111–131 (FLARAMGVIFGVPLLFFVLTG), 137–157 (LWLPLGGIFLLGGLQGAIGWW), 174–194 (LATHLVTACLIFASCMWFMRA), and 211–231 (LAGLIAFMSLFQIYLGALVAG). Residue His-274 participates in heme binding. The next 3 membrane-spanning stretches (helical) occupy residues 276-296 (LGAYALFAVVAVNMIISLRAA), 305-325 (SVVLFVLVLIQAILGITTLLL), and 327-347 (VPLHLALTHQAGALIVFGFAI). A heme-binding site is contributed by His-335.

Belongs to the COX15/CtaA family. Type 2 subfamily. In terms of assembly, interacts with CtaB. Requires heme b as cofactor.

It localises to the cell membrane. It carries out the reaction Fe(II)-heme o + 2 A + H2O = Fe(II)-heme a + 2 AH2. It participates in porphyrin-containing compound metabolism; heme A biosynthesis; heme A from heme O: step 1/1. Catalyzes the conversion of heme O to heme A by two successive hydroxylations of the methyl group at C8. The first hydroxylation forms heme I, the second hydroxylation results in an unstable dihydroxymethyl group, which spontaneously dehydrates, resulting in the formyl group of heme A. This is Heme A synthase from Rhizobium rhizogenes (strain K84 / ATCC BAA-868) (Agrobacterium radiobacter).